A 287-amino-acid chain; its full sequence is PsbP domain-containing protein 1, chloroplastic (287 aa).

It belongs to the PsbP family. As to quaternary structure, partially associated with photosystem I (PSI) complex, but is not a subunit of the complex. Interacts with PsaA and PsaB, but not with PasF.

It localises to the plastid. It is found in the chloroplast thylakoid lumen. Photosystem I assembly factor that assists the proper folding and integration of PsaB and PsaA into the thylakoid membrane. This is PsbP domain-containing protein 1, chloroplastic (PPD1) from Arabidopsis thaliana (Mouse-ear cress).